The chain runs to 466 residues: 3-isopropylmalate dehydratase large subunit (466 aa).

Positions 347, 407, and 410 each coordinate [4Fe-4S] cluster.

It belongs to the aconitase/IPM isomerase family. LeuC type 1 subfamily. As to quaternary structure, heterodimer of LeuC and LeuD. [4Fe-4S] cluster serves as cofactor.

The catalysed reaction is (2R,3S)-3-isopropylmalate = (2S)-2-isopropylmalate. Its pathway is amino-acid biosynthesis; L-leucine biosynthesis; L-leucine from 3-methyl-2-oxobutanoate: step 2/4. Functionally, catalyzes the isomerization between 2-isopropylmalate and 3-isopropylmalate, via the formation of 2-isopropylmaleate. The chain is 3-isopropylmalate dehydratase large subunit from Enterobacter sp. (strain 638).